The sequence spans 595 residues: Neuroepithelial cell-transforming gene 1 protein (595 aa).

Met1 bears the N-acetylmethionine mark. The interval Met1–Glu42 is disordered. The segment at Met1 to Asp74 is necessary for nuclear localization. The Nuclear localization signal signature appears at Arg12 to Arg19. A Phosphoserine modification is found at Ser21. Residues Lys66–Lys72 carry the Nuclear localization signal motif. Residues Ser100, Ser106, and Ser122 each carry the phosphoserine modification. The interval Gly127–Arg151 is disordered. Positions Ala133–Thr146 are enriched in polar residues. The 183-residue stretch at Lys174–Lys356 folds into the DH domain. The region spanning Val386 to Ala501 is the PH domain. At Ser508 the chain carries Phosphoserine. The interval Cys555–Val595 is disordered.

Interacts with RHOA in its GTP- and GDP-bound states, and with CDC42 in its GTP-bound state. Interacts with the PDZ 1 domain of BAIAP1.

It is found in the cytoplasm. Its subcellular location is the nucleus. Its function is as follows. Acts as a guanine nucleotide exchange factor (GEF) for RhoA GTPase. May be involved in activation of the SAPK/JNK pathway. Stimulates genotoxic stress-induced RHOB activity in breast cancer cells leading to their cell death. In Mus musculus (Mouse), this protein is Neuroepithelial cell-transforming gene 1 protein (Net1).